Consider the following 768-residue polypeptide: MTIRGLDNYLKERKLIQSCPISTLANTRLGIDATHYLNHLLTDPNSREPLVAATGGLPLAIISKIESDLRALERHAIKPVFVFAGLPLASRPPPKGPDIKAERENQIKNEAWALYDEGQAYSAVDKLVQFNNGNFVDQRDLLRSIMRLFRHRYVEFVVAPYLGIAQLAYLLQHPKGYIHAIYSSSECLMWPVERVITSSDWNNNFQFVEKVRILNDLNLTSEQFLDFGILAGSSLSRTIPLPQSEFSIKNIADLVRHHKSGISVCQNVRQEPPYKAQFYTESFWKARLAVKFSLVLTTEGACVPLPTVITPQQQAFTVQDVPGDLEEIFSPRIPDELYFHICRGLVSAQVVGWLTSGMIIEQQPLLETGEYRRFIKDVITEGPTSPRCTTIALLADILHPDWSKRRINVHYYFDPPYAPVRGAFVPFTDALTQSLIGRCSDWMVPMFNLEMELRRQNSSTIDLKLCIGALASEELVHRTFKPKGDRVLDKKDEVVANSLWRFLEVRGFVQQNHAHSLIGKALYAAYTVSRVNDRFQEPIYLILELLRAGVLHGGKWGGPEAAPLLGGPSFGDEDEQNSVRLIMRCISVLPLVSRNQQWVGPLSQELLAFNAFVRGLSKSLRQLFEAVSVHLLLSGDGRRNRDDYSDIMLSLPFQTDVNTGFGILAKSYLDATSYHNQLEPITEEMIGTEGAETAKRQAILFIEENFSSVKAPVQELERGFRFWDAVMVAIRCLAEEQGPNPKLAQTVVGRDVIEQFERADKWLKPMRP.

This sequence belongs to the XPG/RAD2 endonuclease family. As to quaternary structure, interacts with PBP1.

It localises to the cytoplasm. It is found in the cytosol. Functionally, involved in 3'-UTR mediated RNA regulation. Complexes with PBP1 to promote mRNA interactions with poly(A)-binding protein. This is Post-transcriptional regulator MKT1 from Cryptococcus neoformans var. grubii serotype A (strain H99 / ATCC 208821 / CBS 10515 / FGSC 9487) (Filobasidiella neoformans var. grubii).